Consider the following 663-residue polypeptide: ATP-dependent zinc metalloprotease FtsH (663 aa).

The Stromal portion of the chain corresponds to 1-12 (MNKKETNTSWWR). A helical membrane pass occupies residues 13–33 (IILISLGISIICILAAFLAMK). The Lumenal segment spans residues 34–135 (DGFFVLENNT…HPPKLDIFKT (102 aa)). The helical transmembrane segment at 136–156 (ISDTLGSLIVPGLVVAVFYLF) threads the bilayer. The Stromal segment spans residues 157–663 (LERANNNNNN…KIYESKFPKK (507 aa)). Positions 165–184 (NNNSNGSPFGPGGGPNQNMR) are disordered. 244–251 (GPPGTGKT) provides a ligand contact to ATP. Zn(2+) is bound at residue H465. The active site involves E466. Positions 469 and 543 each coordinate Zn(2+).

This sequence in the central section; belongs to the AAA ATPase family. In the C-terminal section; belongs to the peptidase M41 family. Homohexamer. Requires Zn(2+) as cofactor.

It is found in the plastid. The protein localises to the chloroplast thylakoid membrane. Functionally, acts as a processive, ATP-dependent zinc metallopeptidase. The sequence is that of ATP-dependent zinc metalloprotease FtsH from Heterosigma akashiwo (strain NIES-293 / 8280G21-1).